Consider the following 206-residue polypeptide: MPFMPVPYVIEQTHRGERSYDIYSRLLKDRIVMLGTEIDDDVANVIVAQLLFLESEDPDKDINLYINSPGGSVTAGLAIYDTMQYVKCPVSTICVGQAASMGAVLLLAGAKGKRYALPSSRIMIHQPLGGVRGQATDIEIQAKEILRMKAKLNELIVKHTGQSIERVEKDTDRDYFMGASEAKAYGIIDEIQNPRKVVGLGKEEKK.

The active-site Nucleophile is Ser-100. The active site involves His-125.

This sequence belongs to the peptidase S14 family. Fourteen ClpP subunits assemble into 2 heptameric rings which stack back to back to give a disk-like structure with a central cavity, resembling the structure of eukaryotic proteasomes.

The protein localises to the cytoplasm. It catalyses the reaction Hydrolysis of proteins to small peptides in the presence of ATP and magnesium. alpha-casein is the usual test substrate. In the absence of ATP, only oligopeptides shorter than five residues are hydrolyzed (such as succinyl-Leu-Tyr-|-NHMec, and Leu-Tyr-Leu-|-Tyr-Trp, in which cleavage of the -Tyr-|-Leu- and -Tyr-|-Trp bonds also occurs).. Cleaves peptides in various proteins in a process that requires ATP hydrolysis. Has a chymotrypsin-like activity. Plays a major role in the degradation of misfolded proteins. The sequence is that of ATP-dependent Clp protease proteolytic subunit 1 from Myxococcus xanthus (strain DK1622).